The sequence spans 312 residues: Tetraacyldisaccharide 4'-kinase (312 aa).

Residue 60–67 (IAGGSGKT) participates in ATP binding.

The protein belongs to the LpxK family.

The enzyme catalyses a lipid A disaccharide + ATP = a lipid IVA + ADP + H(+). Its pathway is glycolipid biosynthesis; lipid IV(A) biosynthesis; lipid IV(A) from (3R)-3-hydroxytetradecanoyl-[acyl-carrier-protein] and UDP-N-acetyl-alpha-D-glucosamine: step 6/6. Functionally, transfers the gamma-phosphate of ATP to the 4'-position of a tetraacyldisaccharide 1-phosphate intermediate (termed DS-1-P) to form tetraacyldisaccharide 1,4'-bis-phosphate (lipid IVA). This is Tetraacyldisaccharide 4'-kinase from Helicobacter pylori (strain HPAG1).